The sequence spans 371 residues: Ubiquitin receptor RAD23b (371 aa).

The 79-residue stretch at 1-79 (MKLTVKTLKG…LVVMLSKSKS (79 aa)) folds into the Ubiquitin-like domain. Residues 79-117 (SGGSAGQASVQTSSVSQPVSATTSSTKPAAPSTTQSSPV) show a composition bias toward low complexity. The interval 79 to 142 (SGGSAGQASV…DTYGQAASTL (64 aa)) is disordered. The segment covering 128–142 (PAAQTDTYGQAASTL) has biased composition (polar residues). A UBA 1 domain is found at 146–189 (SSLEQMVQQIMEMGGGSWDKETVTRALRAAYNNPERAVDYLYSG). Positions 242–285 (GTLEFLRNNDQFQQLRTMVHSNPQILQPMLQELGKQNPQLLRLI) constitute an STI1 domain. The UBA 2 domain maps to 325 to 365 (PAEQEAIQRLEAMGFDRALVIEAFLACDRNEELAANYLLEN).

This sequence belongs to the RAD23 family. In terms of assembly, interacts with 'Lys-48'-linked polyubiquitin chains. Interacts with RPN10 via its ubiquitin-like domain. Interacts with UBQ1, UBQ2, UBQ5, UBQ7, UBQ10, UBQ11 and IAA16. Binds to RAD4. In terms of tissue distribution, widely expressed in the whole plant.

It localises to the nucleus. The protein localises to the cytoplasm. Its function is as follows. May be involved in nucleotide excision repair. Binds and presumably selects ubiquitin-conjugates for destruction. Prefers multiubiquitin chains rather than single ubiquitins, with a binding affinity for 'Lys-48'-linked ubiquitin chains. Acts as a ubiquitin receptor that associates with the 26S proteasomal docking subunit RPN10 for the indirect recognition of ubiquitinated substrates of ubiquitin/26S proteasome-mediated proteolysis (UPP). Involved in UV tolerance in both roots and hypocotyls, specifically in dark conditions. The protein is Ubiquitin receptor RAD23b of Arabidopsis thaliana (Mouse-ear cress).